Consider the following 272-residue polypeptide: Shikimate dehydrogenase (NADP(+)) (272 aa).

Shikimate-binding positions include 14-16 (SKS) and Thr61. The Proton acceptor role is filled by Lys65. 2 residues coordinate shikimate: Asn86 and Asp102. NADP(+) contacts are provided by residues 126–130 (GAGGA), 149–154 (NRTFSK), Ser189, and Met213. Shikimate is bound at residue Tyr215. Residue Gly238 participates in NADP(+) binding.

This sequence belongs to the shikimate dehydrogenase family. Homodimer.

It carries out the reaction shikimate + NADP(+) = 3-dehydroshikimate + NADPH + H(+). The protein operates within metabolic intermediate biosynthesis; chorismate biosynthesis; chorismate from D-erythrose 4-phosphate and phosphoenolpyruvate: step 4/7. Involved in the biosynthesis of the chorismate, which leads to the biosynthesis of aromatic amino acids. Catalyzes the reversible NADPH linked reduction of 3-dehydroshikimate (DHSA) to yield shikimate (SA). The sequence is that of Shikimate dehydrogenase (NADP(+)) from Haemophilus influenzae (strain ATCC 51907 / DSM 11121 / KW20 / Rd).